The primary structure comprises 191 residues: MSQKITLIKDKVLSDNYFILRNITYDLTRKNGDVIRHKREVYDRGNGATILLYNREKQTVVLIRQFRVATWVNGNESGQLIETCAGLLDNDEPEACIRKEAIEETGYEVGEVRKLFELYMSPGGVTELIHFFIAEYSDSQRANAGGGVEDEDIEVLELPLTQALAMIKTGEIRDGKTVLLLNYLHSSSLIY.

GDP-alpha-D-mannose contacts are provided by residues Tyr17, 38 to 40 (KRE), Arg67, and 85 to 87 (AGL). The region spanning 43 to 180 (DRGNGATILL…EIRDGKTVLL (138 aa)) is the Nudix hydrolase domain. The Mg(2+) site is built by Ala85, Glu100, and Glu104. Positions 86–106 (GLLDNDEPEACIRKEAIEETG) match the Nudix box motif. Residues Glu104, Glu127, 150-151 (DE), and Lys176 contribute to the GDP-alpha-D-mannose site. Residue Glu151 coordinates Mg(2+).

The protein belongs to the Nudix hydrolase family. NudK subfamily. Homodimer. It depends on Mg(2+) as a cofactor.

It carries out the reaction GDP-alpha-D-mannose + H2O = alpha-D-mannose 1-phosphate + GMP + 2 H(+). Functionally, nucleoside diphosphate sugar hydrolase that hydrolyzes GDP-mannose as its preferred substrate, yielding GMP and mannose-1-phosphate. This Citrobacter koseri (strain ATCC BAA-895 / CDC 4225-83 / SGSC4696) protein is GDP-mannose pyrophosphatase (nudK).